Here is a 509-residue protein sequence, read N- to C-terminus: Transcription factor SOX-9 (509 aa).

Disordered stretches follow at residues 1–67 (MNLL…SEED) and 160–273 (RLRV…FRDV). The segment covering 30-41 (SAGSPCPSGSGS) has biased composition (low complexity). Polar residues predominate over residues 42–52 (DTENTRPQENT). Composition is skewed to basic and acidic residues over residues 56-67 (GEPDLKKESEED) and 160-174 (RLRV…DYKY). The interval 63 to 103 (ESEEDKFPVCIREAVSQVLKGYDWTLVPMPVRVNGSSKNKP) is dimerization (DIM). The PQA stretch occupies residues 63 to 103 (ESEEDKFPVCIREAVSQVLKGYDWTLVPMPVRVNGSSKNKP). Residue serine 64 is modified to Phosphoserine. A DNA-binding region (HMG box) is located at residues 105-173 (VKRPMNAFMV…QHKKDHPDYK (69 aa)). Serine 211 is subject to Phosphoserine. The interval 224–307 (PGEHSGQSQG…LPPNGHPGVP (84 aa)) is transactivation domain (TAM). 2 short sequence motifs (9aaTAD) span residues 275–284 (IGELSSDVIS) and 290–298 (DVNEFDQYL). A disordered region spans residues 330–415 (SAGHVWMSKQ…HYSEQQQHSP (86 aa)). Residues 341–376 (APPPPPQQPPQAPPAPQAPPQPQAAPPQQPAAPPQQ) are compositionally biased toward pro residues. The segment covering 380–415 (HTLTTLSSEPGQSQRTHIKTEQLSPSHYSEQQQHSP) has biased composition (polar residues). Residues 394-509 (RTHIKTEQLS…QPVYTQLTRP (116 aa)) form a transactivation domain (TAC) region. Lysine 398 is covalently cross-linked (Glycyl lysine isopeptide (Lys-Gly) (interchain with G-Cter in ubiquitin)). Residues 460–468 (TGLYSTFTY) carry the 9aaTAD 3 motif. Residues 479-509 (PIADTSGVPSIPQTHSPQHWEQPVYTQLTRP) form a disordered region. The span at 485-509 (GVPSIPQTHSPQHWEQPVYTQLTRP) shows a compositional bias: polar residues.

Homodimer; homodimerization is required for activity. Interacts (via C-terminus) with ZNF219; forming a complex that binds to the COL2A1 promoter and activates COL2A1 expression. Interacts with DDRGK1. Interacts with EP300/p300. Interacts with beta-catenin (CTNNB1); inhibiting CTNNB1 activity by competing with the binding sites of TCF/LEF within CTNNB1. In terms of processing, acetylated; acetylation impairs nuclear localization and ability to transactivate expression of target genes. Deacetylated by SIRT1. Post-translationally, phosphorylation at Ser-64 and Ser-211 by PKA increases transcriptional activity and may help delay chondrocyte maturation downstream of PTHLH/PTHrP signaling. Phosphorylation at either Ser-64 or Ser-211 is required for sumoylation, but phosphorylation is not dependent on sumoylation. Phosphorylated on tyrosine residues; tyrosine dephosphorylation by PTPN11/SHP2 blocks SOX9 phosphorylation by PKA and subsequent SUMOylation. Ubiquitinated; ubiquitination leads to proteasomal degradation and is negatively regulated by DDRGK1. In terms of processing, sumoylated; phosphorylation at either Ser-64 or Ser-211 is required for sumoylation. Sumoylation is induced by BMP signaling pathway.

It is found in the nucleus. Its function is as follows. Transcription factor that plays a key role in chondrocytes differentiation and skeletal development. Specifically binds the 5'-ACAAAG-3' DNA motif present in enhancers and super-enhancers and promotes expression of genes important for chondrogenesis, including cartilage matrix protein-coding genes COL2A1, COL4A2, COL9A1, COL11A2 and ACAN, SOX5 and SOX6. Also binds to some promoter regions. Plays a central role in successive steps of chondrocyte differentiation. Absolutely required for precartilaginous condensation, the first step in chondrogenesis during which skeletal progenitors differentiate into prechondrocytes. Together with SOX5 and SOX6, required for overt chondrogenesis when condensed prechondrocytes differentiate into early stage chondrocytes, the second step in chondrogenesis. Later, required to direct hypertrophic maturation and block osteoblast differentiation of growth plate chondrocytes: maintains chondrocyte columnar proliferation, delays prehypertrophy and then prevents osteoblastic differentiation of chondrocytes by lowering beta-catenin (CTNNB1) signaling and RUNX2 expression. Also required for chondrocyte hypertrophy, both indirectly, by keeping the lineage fate of chondrocytes, and directly, by remaining present in upper hypertrophic cells and transactivating COL10A1 along with MEF2C. Low lipid levels are the main nutritional determinant for chondrogenic commitment of skeletal progenitor cells: when lipids levels are low, FOXO (FOXO1 and FOXO3) transcription factors promote expression of SOX9, which induces chondrogenic commitment and suppresses fatty acid oxidation. Mechanistically, helps, but is not required, to remove epigenetic signatures of transcriptional repression and deposit active promoter and enhancer marks at chondrocyte-specific genes. Acts in cooperation with the Hedgehog pathway-dependent GLI (GLI1 and GLI3) transcription factors. In addition to cartilage development, also acts as a regulator of proliferation and differentiation in epithelial stem/progenitor cells: involved in the lung epithelium during branching morphogenesis, by balancing proliferation and differentiation and regulating the extracellular matrix. Controls epithelial branching during kidney development. This is Transcription factor SOX-9 from Homo sapiens (Human).